The following is a 417-amino-acid chain: Serine hydroxymethyltransferase 1 (417 aa).

Residues L121 and 125-127 (GHL) contribute to the (6S)-5,6,7,8-tetrahydrofolate site. K230 is subject to N6-(pyridoxal phosphate)lysine. 355-357 (SPF) serves as a coordination point for (6S)-5,6,7,8-tetrahydrofolate.

This sequence belongs to the SHMT family. As to quaternary structure, homodimer. The cofactor is pyridoxal 5'-phosphate.

Its subcellular location is the cytoplasm. It carries out the reaction (6R)-5,10-methylene-5,6,7,8-tetrahydrofolate + glycine + H2O = (6S)-5,6,7,8-tetrahydrofolate + L-serine. It participates in one-carbon metabolism; tetrahydrofolate interconversion. Its pathway is amino-acid biosynthesis; glycine biosynthesis; glycine from L-serine: step 1/1. Functionally, catalyzes the reversible interconversion of serine and glycine with tetrahydrofolate (THF) serving as the one-carbon carrier. This reaction serves as the major source of one-carbon groups required for the biosynthesis of purines, thymidylate, methionine, and other important biomolecules. Also exhibits THF-independent aldolase activity toward beta-hydroxyamino acids, producing glycine and aldehydes, via a retro-aldol mechanism. The protein is Serine hydroxymethyltransferase 1 of Pseudomonas syringae pv. tomato (strain ATCC BAA-871 / DC3000).